A 491-amino-acid chain; its full sequence is Spermatogenesis-defective protein 39 homolog (491 aa).

Thr21 is subject to Phosphothreonine. The span at 72–81 shows a compositional bias: polar residues; that stretch reads KETAGSSGST. The disordered stretch occupies residues 72 to 101; the sequence is KETAGSSGSTPEGREQLKGRNSFYTQLPKP. The residue at position 115 (Thr115) is a Phosphothreonine. Phosphoserine occurs at positions 119, 122, and 128. The tract at residues 121-141 is disordered; the sequence is QSLSDALSDTPAKSYAPELGR. Residue Thr130 is modified to Phosphothreonine.

Belongs to the SPE39 family. Interacts with VPS33B. Associates with the homotypic fusion and vacuole protein sorting (HOPS) complex; impaired by VPS33B. Interacts with RAB11A.

The protein resides in the cytoplasm. It is found in the cytoplasmic vesicle. It localises to the early endosome. Its subcellular location is the recycling endosome. The protein localises to the late endosome. Its function is as follows. Proposed to be involved in endosomal maturation implicating in part VPS33B. In epithelial cells, the VPS33B:VIPAS39 complex may play a role in the apical RAB11A-dependent recycling pathway and in the maintenance of the apical-basolateral polarity. May play a role in lysosomal trafficking, probably via association with the core HOPS complex in a discrete population of endosomes; the functions seems to be independent of VPS33B. May play a role in vesicular trafficking during spermatogenesis. May be involved in direct or indirect transcriptional regulation of E-cadherin. This Mus musculus (Mouse) protein is Spermatogenesis-defective protein 39 homolog (Vipas39).